The primary structure comprises 146 residues: Single-stranded DNA-binding protein 1-A, mitochondrial (146 aa).

The N-terminal 17 residues, 1 to 17 (MFHRPALQVFRQFARCQ), are a transit peptide targeting the mitochondrion. One can recognise an SSB domain in the interval 28–140 (INKVQLLGRV…IIADNIIFLS (113 aa)).

As to quaternary structure, homotetramer.

The protein localises to the mitochondrion. The protein resides in the mitochondrion matrix. Its subcellular location is the mitochondrion nucleoid. Functionally, binds preferentially and cooperatively to pyrimidine rich single-stranded DNA (ss-DNA). Required to maintain the copy number of mitochondrial DNA (mtDNA) and plays crucial roles during mtDNA replication that stimulate activity of the DNA polymerase at the replication fork. May also function in mtDNA repair. In Xenopus laevis (African clawed frog), this protein is Single-stranded DNA-binding protein 1-A, mitochondrial (ssbp1-a).